Consider the following 350-residue polypeptide: 3-methylornithine synthase (350 aa).

The region spanning 57 to 279 is the Radical SAM core domain; sequence NRVFLNCFIY…PKRLIPASLD (223 aa). [4Fe-4S] cluster-binding residues include cysteine 71 and cysteine 75. Phenylalanine 77 serves as a coordination point for S-adenosyl-L-methionine. A [4Fe-4S] cluster-binding site is contributed by cysteine 78. The (3R)-3-methyl-D-ornithine site is built by aspartate 112, serine 146, and tyrosine 169. Residues glutamate 171, arginine 182, and arginine 190 each coordinate S-adenosyl-L-methionine. Arginine 235 lines the (3R)-3-methyl-D-ornithine pocket. The S-adenosyl-L-methionine site is built by leucine 240 and glutamine 242. Positions 277, 298, and 299 each coordinate (3R)-3-methyl-D-ornithine.

The protein belongs to the radical SAM superfamily. PylB family. [4Fe-4S] cluster is required as a cofactor. Requires S-adenosyl-L-methionine as cofactor.

The enzyme catalyses L-lysine = (3R)-3-methyl-D-ornithine. It participates in amino-acid biosynthesis; L-pyrrolysine biosynthesis. Functionally, catalyzes the isomerization of L-lysine to (3R)-3-methyl-D-ornithine via a radical-based mechanism, a step in the biosynthesis pathway of pyrrolysine. Also catalyzes the reverse reaction in vitro, converting (3R)-3-methyl-D-ornithine into L-lysine. This chain is 3-methylornithine synthase, found in Methanosarcina barkeri (strain Fusaro / DSM 804).